The primary structure comprises 284 residues: Proteasome subunit beta 1 (284 aa).

A propeptide spans Met1 to Gly54 (removed in mature form; by autocatalysis). Residue Thr55 is the Nucleophile of the active site. Over residues Arg256 to Pro277 the composition is skewed to basic and acidic residues. The interval Arg256–Met284 is disordered.

The protein belongs to the peptidase T1B family. In terms of assembly, the 20S proteasome core is composed of 14 alpha and 14 beta subunits that assemble into four stacked heptameric rings, resulting in a barrel-shaped structure. The two inner rings, each composed of seven catalytic beta subunits, are sandwiched by two outer rings, each composed of seven alpha subunits. The catalytic chamber with the active sites is on the inside of the barrel. Has a gated structure, the ends of the cylinder being occluded by the N-termini of the alpha-subunits. Is capped by the proteasome-associated ATPase, ARC.

Its subcellular location is the cytoplasm. It catalyses the reaction Cleavage of peptide bonds with very broad specificity.. The protein operates within protein degradation; proteasomal Pup-dependent pathway. The formation of the proteasomal ATPase ARC-20S proteasome complex, likely via the docking of the C-termini of ARC into the intersubunit pockets in the alpha-rings, may trigger opening of the gate for substrate entry. Interconversion between the open-gate and close-gate conformations leads to a dynamic regulation of the 20S proteasome proteolysis activity. In terms of biological role, component of the proteasome core, a large protease complex with broad specificity involved in protein degradation. The protein is Proteasome subunit beta 1 of Streptomyces avermitilis (strain ATCC 31267 / DSM 46492 / JCM 5070 / NBRC 14893 / NCIMB 12804 / NRRL 8165 / MA-4680).